Here is a 333-residue protein sequence, read N- to C-terminus: MDERLLSQSHQQYEDSEEWSLRPQRFEQYIGQEKAKGNLSVFIQAAKLRSETLDHVLLYGPPGLGKTTLAQIIANEMGVGIKTTAGPAIERPGDLAAILSTLEPGDVLFIDEIHRLSRTIEEILYPAMEDYCLDIVYGQGEMARSVRIDLPPFTLVGATTRAGMLSAPLRDRFGVTLKLEYYETHELAAIVSRTAQLFRLSISPEASGAIAKRSRGTPRIANRLLRRVRDFAQVAGTKEIDPVLASDALDRLHVDALGLDEVDHRLLRAMVERFGGGPVGLETLAATIGEDAQTIEDVYEPYLLQQGFLQRTPRGRMITQFAKSHFGYEEEEE.

The tract at residues Met1–Tyr182 is large ATPase domain (RuvB-L). Residues Leu21, Arg22, Gly63, Lys66, Thr67, Thr68, Glu129–Tyr131, Arg172, Tyr182, and Arg219 each bind ATP. Thr67 contacts Mg(2+). Residues Glu183–His253 are small ATPAse domain (RuvB-S). Residues Ala256–Glu333 form a head domain (RuvB-H) region. Residues Arg311 and Arg316 each contribute to the DNA site.

Belongs to the RuvB family. As to quaternary structure, homohexamer. Forms an RuvA(8)-RuvB(12)-Holliday junction (HJ) complex. HJ DNA is sandwiched between 2 RuvA tetramers; dsDNA enters through RuvA and exits via RuvB. An RuvB hexamer assembles on each DNA strand where it exits the tetramer. Each RuvB hexamer is contacted by two RuvA subunits (via domain III) on 2 adjacent RuvB subunits; this complex drives branch migration. In the full resolvosome a probable DNA-RuvA(4)-RuvB(12)-RuvC(2) complex forms which resolves the HJ.

Its subcellular location is the cytoplasm. It carries out the reaction ATP + H2O = ADP + phosphate + H(+). The RuvA-RuvB-RuvC complex processes Holliday junction (HJ) DNA during genetic recombination and DNA repair, while the RuvA-RuvB complex plays an important role in the rescue of blocked DNA replication forks via replication fork reversal (RFR). RuvA specifically binds to HJ cruciform DNA, conferring on it an open structure. The RuvB hexamer acts as an ATP-dependent pump, pulling dsDNA into and through the RuvAB complex. RuvB forms 2 homohexamers on either side of HJ DNA bound by 1 or 2 RuvA tetramers; 4 subunits per hexamer contact DNA at a time. Coordinated motions by a converter formed by DNA-disengaged RuvB subunits stimulates ATP hydrolysis and nucleotide exchange. Immobilization of the converter enables RuvB to convert the ATP-contained energy into a lever motion, pulling 2 nucleotides of DNA out of the RuvA tetramer per ATP hydrolyzed, thus driving DNA branch migration. The RuvB motors rotate together with the DNA substrate, which together with the progressing nucleotide cycle form the mechanistic basis for DNA recombination by continuous HJ branch migration. Branch migration allows RuvC to scan DNA until it finds its consensus sequence, where it cleaves and resolves cruciform DNA. In Exiguobacterium sp. (strain ATCC BAA-1283 / AT1b), this protein is Holliday junction branch migration complex subunit RuvB.